We begin with the raw amino-acid sequence, 251 residues long: MTSLVSLENVSVSFGQRRVLSDVSLELKPGKILTLLGPNGAGKSTLVRVVLGLVTPDEGVIKRNGKLRIGYVPQKLYLDTTLPLTVKRFLRLRPGTHKEDILPALKRVQAGHLINAPMQKLSGGETQRVLLARALLNRPQLLVLDEPTQGVDVNGQVALYDLIDQLRRELDCGVLMVSHDLHLVMAKTDEVLCLNHHICCSGTPEVVSLHPEFISMFGPRGAEQLGIYRHHHNHRHDLQGRIVLRRGNDRS.

Residues 5 to 220 (VSLENVSVSF…PEFISMFGPR (216 aa)) form the ABC transporter domain. 37-44 (GPNGAGKS) contributes to the ATP binding site.

It belongs to the ABC transporter superfamily. Zinc importer (TC 3.A.1.15.5) family. The complex is composed of two ATP-binding proteins (ZnuC), two transmembrane proteins (ZnuB) and a solute-binding protein (ZnuA).

It localises to the cell inner membrane. The enzyme catalyses Zn(2+)(out) + ATP(in) + H2O(in) = Zn(2+)(in) + ADP(in) + phosphate(in) + H(+)(in). In terms of biological role, part of the ABC transporter complex ZnuABC involved in zinc import. Responsible for energy coupling to the transport system. The protein is Zinc import ATP-binding protein ZnuC of Shigella dysenteriae serotype 1 (strain Sd197).